Here is a 321-residue protein sequence, read N- to C-terminus: Zinc finger protein 524 (321 aa).

Polar residues-rich tracts occupy residues 1–14 (MDNP…STLS) and 39–48 (ATTSNRTLKS). Disordered regions lie at residues 1-80 (MDNP…DLLL) and 86-105 (VPYT…SGSK). Residues 49 to 59 (SLPRKRGRPPR) constitute a DNA-binding region (a.T hook). 4 C2H2-type zinc fingers span residues 109-131 (HFCP…SISH), 137-159 (HVCK…CNIH), 165-187 (FRCV…HRIH), and 193-216 (YQCP…KRKH). The tract at residues 248-321 (GVQEESPEGK…PGAIGHPPVD (74 aa)) is disordered. A compositionally biased stretch (polar residues) spans 262–271 (PISSTTSPLS). A compositionally biased stretch (gly residues) spans 274–285 (TAGGSAGAGRGQ).

This sequence belongs to the krueppel C2H2-type zinc-finger protein family.

It is found in the nucleus. May be involved in transcriptional regulation. The polypeptide is Zinc finger protein 524 (Znf524) (Mus musculus (Mouse)).